Here is a 68-residue protein sequence, read N- to C-terminus: Large ribosomal subunit protein uL29 (68 aa).

The protein belongs to the universal ribosomal protein uL29 family.

This is Large ribosomal subunit protein uL29 from Streptococcus gordonii (strain Challis / ATCC 35105 / BCRC 15272 / CH1 / DL1 / V288).